A 156-amino-acid polypeptide reads, in one-letter code: Peptidyl-prolyl cis-trans isomerase H (156 aa).

The PPIase cyclophilin-type domain maps to 1 to 155 (TPAGRLKCEL…MAVRITQCGE (155 aa)).

Belongs to the cyclophilin-type PPIase family. PPIase H subfamily.

The protein localises to the nucleus. It carries out the reaction [protein]-peptidylproline (omega=180) = [protein]-peptidylproline (omega=0). Functionally, PPIases accelerate the folding of proteins. It catalyzes the cis-trans isomerization of proline imidic peptide bonds in oligopeptides. In Mycosarcoma maydis (Corn smut fungus), this protein is Peptidyl-prolyl cis-trans isomerase H (CYP3).